Here is a 177-residue protein sequence, read N- to C-terminus: NADH-quinone oxidoreductase subunit B (177 aa).

4 residues coordinate [4Fe-4S] cluster: Cys-56, Cys-57, Cys-121, and Cys-151.

The protein belongs to the complex I 20 kDa subunit family. NDH-1 is composed of 14 different subunits. Subunits NuoB, C, D, E, F, and G constitute the peripheral sector of the complex. Requires [4Fe-4S] cluster as cofactor.

It is found in the cell inner membrane. The enzyme catalyses a quinone + NADH + 5 H(+)(in) = a quinol + NAD(+) + 4 H(+)(out). In terms of biological role, NDH-1 shuttles electrons from NADH, via FMN and iron-sulfur (Fe-S) centers, to quinones in the respiratory chain. Couples the redox reaction to proton translocation (for every two electrons transferred, four hydrogen ions are translocated across the cytoplasmic membrane), and thus conserves the redox energy in a proton gradient. This chain is NADH-quinone oxidoreductase subunit B, found in Roseobacter denitrificans (strain ATCC 33942 / OCh 114) (Erythrobacter sp. (strain OCh 114)).